Here is a 230-residue protein sequence, read N- to C-terminus: Ropporin-1-like protein (230 aa).

Residues 17 to 54 enclose the RIIa domain; sequence PELPDILKQFTKAAIRTQPADVLQWSAGYFSALSRGDP.

This sequence belongs to the ropporin family. In terms of assembly, component of the axonemal radial spoke complex 1 (RS1), at least composed of spoke head proteins RSPH1, RSPH3, RSPH9 and the cilia-specific component RSPH4A or sperm-specific component RSPH6A, spoke stalk proteins RSPH14, DNAJB13, DYDC1, ROPN1L and NME5, and the anchor protein IQUB. May interact with AKAP3. Interacts with FSCB; the interaction increases upon spermatozoa capacitation conditions. Interacts with CFAP61. In terms of processing, sumoylated, sumoylation decreases upon spermatozoa capacitation conditions.

It is found in the cell projection. It localises to the cilium. The protein localises to the flagellum. In terms of biological role, functions as part of axonemal radial spoke complexes that play an important part in the motility of sperm and cilia. Important for male fertility. With ROPN1, involved in fibrous sheath integrity and sperm motility, plays a role in PKA-dependent signaling processes required for spermatozoa capacitation. This chain is Ropporin-1-like protein (ROPN1L), found in Macaca fascicularis (Crab-eating macaque).